Consider the following 298-residue polypeptide: Diphthine methyl ester synthase (298 aa).

S-adenosyl-L-methionine contacts are provided by residues Leu-9, Asp-85, Gly-88, 113–114 (SV), Leu-164, Leu-222, and His-247.

This sequence belongs to the diphthine synthase family.

Its subcellular location is the cytoplasm. The enzyme catalyses 2-[(3S)-amino-3-carboxypropyl]-L-histidyl-[translation elongation factor 2] + 4 S-adenosyl-L-methionine = diphthine methyl ester-[translation elongation factor 2] + 4 S-adenosyl-L-homocysteine + 3 H(+). It functions in the pathway protein modification; peptidyl-diphthamide biosynthesis. S-adenosyl-L-methionine-dependent methyltransferase that catalyzes four methylations of the modified target histidine residue in translation elongation factor 2 (EF-2), to form an intermediate called diphthine methyl ester. The four successive methylation reactions represent the second step of diphthamide biosynthesis. The chain is Diphthine methyl ester synthase (DPH5) from Eremothecium gossypii (strain ATCC 10895 / CBS 109.51 / FGSC 9923 / NRRL Y-1056) (Yeast).